Here is a 505-residue protein sequence, read N- to C-terminus: ATP synthase subunit alpha (505 aa).

Residue 169–176 (GDRQIGKT) coordinates ATP.

The protein belongs to the ATPase alpha/beta chains family. As to quaternary structure, F-type ATPases have 2 components, CF(1) - the catalytic core - and CF(0) - the membrane proton channel. CF(1) has five subunits: alpha(3), beta(3), gamma(1), delta(1), epsilon(1). CF(0) has three main subunits: a(1), b(2) and c(9-12). The alpha and beta chains form an alternating ring which encloses part of the gamma chain. CF(1) is attached to CF(0) by a central stalk formed by the gamma and epsilon chains, while a peripheral stalk is formed by the delta and b chains.

It localises to the cell inner membrane. The catalysed reaction is ATP + H2O + 4 H(+)(in) = ADP + phosphate + 5 H(+)(out). Functionally, produces ATP from ADP in the presence of a proton gradient across the membrane. The alpha chain is a regulatory subunit. The chain is ATP synthase subunit alpha from Desulfatibacillum aliphaticivorans.